The following is a 793-amino-acid chain: Coiled-coil domain-containing protein 175 (793 aa).

Coiled-coil stretches lie at residues 131–163 (EINT…NEAL), 205–377 (KRED…VLSE), 431–535 (KTVY…MLMK), 562–679 (LPQL…KYRE), and 716–745 (LVDN…QHVS).

This Homo sapiens (Human) protein is Coiled-coil domain-containing protein 175 (CCDC175).